Consider the following 73-residue polypeptide: Small, acid-soluble spore protein C2 (73 aa).

This sequence belongs to the alpha/beta-type SASP family.

Its function is as follows. SASP are bound to spore DNA. They are double-stranded DNA-binding proteins that cause DNA to change to an a-like conformation. They protect the DNA backbone from chemical and enzymatic cleavage and are thus involved in dormant spore's high resistance to UV light. In Priestia megaterium (Bacillus megaterium), this protein is Small, acid-soluble spore protein C2 (SASP-C2).